Reading from the N-terminus, the 512-residue chain is Cytochrome P450 monooxygenase FrzL (512 aa).

Residues 6 to 26 (TMLAFVPYLAVFVACYGLVYY) form a helical membrane-spanning segment. Cysteine 423 provides a ligand contact to heme.

Belongs to the cytochrome P450 family. Requires heme as cofactor.

It is found in the membrane. Its function is as follows. Cytochrome P450 monooxygenase; part of the gene cluster that mediates the biosynthesis of the alkaloid (-)-FR901483, a potent immunosuppressant that shows efficacy in animal models and a probable inhibitor of purine nucleotide biosynthesis by targeting phosphoribosylpyrophosphate amidotransferase (PPAT). The only unassigned enzyme in the cluster is the second cytochrome P450 monooxygenase FrzL. The biosynthesis of (-)-FR901483 starts with the condensation of two L-tyrosines to yield (S,S)-dityrosyl-piperazine. This process occurs in 3 steps with the non-canonical nonribosomal peptide synthetase FrzA catalyzing the reduction of L-tyrosine into L-tyrosinal, the spontaneous condensation of 2 L-tyrosinal units, and the subsequent reduction by the NmrA-like family domain-containing oxidoreductase FrzB. The cytochrome P450 monooxygenase FrzC then performs coupling between N10 and C1' to morph the piperazine into a 1,4-diazabicyclo[3.2.1]octane spiro-fused to a 2,5-cyclohexadienone. The dienone portion is further reduced to cyclohexanone by the flavin-dependent reductase FrzD. The methyltranserases (MTs) FrzE and FrzF are then involved in the methylation at the C10' amine and the C4 phenolic oxygen, respectively. The order of the two MTs appear to be interchangeable. Cleavage of the C9-N10' bond by the dioxygenase FrzG then leads to formation of a conjugated iminium. In addition to the oxidation of C9, an additional dehydrogenation between C7 and C8 can occur to give a likely shunt product. The next biosynthetic step is the intramolecular aldol condensation catalyzed by the newly identified aldolase FrzH to yield an aza-tricyclic product with the formation of a C9-C3' bond. The short-chain dehydrogenase/reductase FrzI then produces dephospho-(-)-FR901483 that is phosphorylated at C4'-OH into (-)-FR901483 by the phosphotransferase FrzJ. This Cladobotryum sp protein is Cytochrome P450 monooxygenase FrzL.